The sequence spans 182 residues: ADP-ribosylation factor-like protein 3 (182 aa).

Glycine 2 carries the N-myristoyl glycine lipid modification. The residue at position 5 (serine 5) is a Phosphoserine. Residues 24–31 (GLDNAGKT), threonine 48, 67–71 (DIGGQ), glycine 70, 126–129 (NKQD), and 159–161 (SAL) contribute to the GTP site. The Mg(2+) site is built by threonine 31 and threonine 48.

The protein belongs to the small GTPase superfamily. Arf family. Found in a complex with ARL3, RP2 and UNC119 (or UNC119B); RP2 induces hydrolysis of GTP ARL3 in the complex, leading to the release of UNC119 (or UNC119B). Interacts with RP2; interaction is direct and stimulated with the activated GTP-bound form of ARL3. Interacts with SYS1. Interacts with ARL2BP; the GTP-bound form interacts with ARL2BP. Microtubule-associated protein. Does not interact with TBCC. Interacts with RP2. Interacts with PDE6D; the interaction occurs specifically with the GTP-bound form of ARL3. Interacts with GGA1; the interaction recruits PKD1:PKD2 complex to trans-Golgi network and is required for ciliary targeting of PKD1:PKD2 complex. Interacts with DNAAF9.

The protein localises to the golgi apparatus membrane. The protein resides in the cytoplasm. Its subcellular location is the cytoskeleton. It is found in the spindle. It localises to the nucleus. The protein localises to the microtubule organizing center. The protein resides in the centrosome. Its subcellular location is the cell projection. It is found in the cilium. Small GTP-binding protein which cycles between an inactive GDP-bound and an active GTP-bound form, and the rate of cycling is regulated by guanine nucleotide exchange factors (GEF) and GTPase-activating proteins (GAP). Required for normal cytokinesis and cilia signaling. Required for targeting proteins to the cilium, including myristoylated NPHP3 and prenylated INPP5E. Targets NPHP3 to the ciliary membrane by releasing myristoylated NPHP3 from UNC119B cargo adapter into the cilium. Requires assistance from GTPase-activating proteins (GAPs) like RP2 and PDE6D, in order to cycle between inactive GDP-bound and active GTP-bound forms. Required for PKD1:PKD2 complex targeting from the trans-Golgi network to the cilium. The protein is ADP-ribosylation factor-like protein 3 of Mus musculus (Mouse).